The primary structure comprises 313 residues: Protoheme IX farnesyltransferase (313 aa).

8 consecutive transmembrane segments (helical) span residues 32 to 52 (VMSL…GDFH), 53 to 73 (PVLA…AGAL), 120 to 140 (VLVN…YVVI), 153 to 173 (IVIG…AVTG), 180 to 200 (LLLF…LALF), 226 to 246 (ILLY…LGYF), 248 to 268 (AVYG…AIRV), and 284 to 304 (LFKF…IEVV).

The protein belongs to the UbiA prenyltransferase family. Protoheme IX farnesyltransferase subfamily.

The protein resides in the cell inner membrane. It carries out the reaction heme b + (2E,6E)-farnesyl diphosphate + H2O = Fe(II)-heme o + diphosphate. It functions in the pathway porphyrin-containing compound metabolism; heme O biosynthesis; heme O from protoheme: step 1/1. In terms of biological role, converts heme B (protoheme IX) to heme O by substitution of the vinyl group on carbon 2 of heme B porphyrin ring with a hydroxyethyl farnesyl side group. In Rhodopseudomonas palustris (strain BisB5), this protein is Protoheme IX farnesyltransferase.